Here is a 125-residue protein sequence, read N- to C-terminus: Small ribosomal subunit protein eS8 (125 aa).

The disordered stretch occupies residues 1–20; that stretch reads MLWQGESIRKVTGGRRRPAQ.

It belongs to the eukaryotic ribosomal protein eS8 family. In terms of assembly, part of the 30S ribosomal subunit.

This Methanoregula boonei (strain DSM 21154 / JCM 14090 / 6A8) protein is Small ribosomal subunit protein eS8.